The chain runs to 823 residues: Valine--tRNA ligase (823 aa).

ATP is bound at residue Lys-547.

Belongs to the class-I aminoacyl-tRNA synthetase family. ValS type 2 subfamily.

It localises to the cytoplasm. The enzyme catalyses tRNA(Val) + L-valine + ATP = L-valyl-tRNA(Val) + AMP + diphosphate. Functionally, catalyzes the attachment of valine to tRNA(Val). As ValRS can inadvertently accommodate and process structurally similar amino acids such as threonine, to avoid such errors, it has a 'posttransfer' editing activity that hydrolyzes mischarged Thr-tRNA(Val) in a tRNA-dependent manner. In Aeropyrum pernix (strain ATCC 700893 / DSM 11879 / JCM 9820 / NBRC 100138 / K1), this protein is Valine--tRNA ligase (valS).